A 404-amino-acid polypeptide reads, in one-letter code: Aspergillopepsin-1 (404 aa).

The first 20 residues, methionine 1–alanine 20, serve as a signal peptide directing secretion. Positions leucine 21–valine 77 are cleaved as a propeptide — activation peptide. The Peptidase A1 domain occupies tyrosine 95 to alanine 401. Aspartate 111 is an active-site residue. A glycan (N-linked (GlcNAc...) asparagine) is linked at asparagine 140. The active site involves aspartate 293. Cysteine 329 and cysteine 364 are joined by a disulfide.

Belongs to the peptidase A1 family. As to quaternary structure, monomer.

It localises to the secreted. It catalyses the reaction Hydrolysis of proteins with broad specificity. Generally favors hydrophobic residues in P1 and P1', but also accepts Lys in P1, which leads to activation of trypsinogen. Does not clot milk.. Functionally, secreted aspartic endopeptidase that allows assimilation of proteinaceous substrates. The scissile peptide bond is attacked by a nucleophilic water molecule activated by two aspartic residues in the active site. Shows a broad primary substrate specificity. Favors hydrophobic residues at the P1 and P1' positions, but also accepts a lysine residue in the P1 position, leading to the activation of trypsinogen and chymotrypsinogen A. This is Aspergillopepsin-1 (pepA) from Aspergillus flavus (strain ATCC 200026 / FGSC A1120 / IAM 13836 / NRRL 3357 / JCM 12722 / SRRC 167).